A 62-amino-acid polypeptide reads, in one-letter code: Synergistic-type venom protein C8S2, chain 2 (62 aa).

3 cysteine pairs are disulfide-bonded: cysteine 3/cysteine 24, cysteine 17/cysteine 42, and cysteine 46/cysteine 57.

It belongs to the three-finger toxin family. Short-chain subfamily. Aminergic toxin sub-subfamily. In terms of assembly, heterodimer of C8S2 chain 1 (AC P01410) and chain 2; disulfide-linked. In terms of tissue distribution, expressed by the venom gland.

It is found in the secreted. This protein shows a synergetic toxic effect in that it enhances the toxicity of other toxins. This is Synergistic-type venom protein C8S2, chain 2 from Dendroaspis angusticeps (Eastern green mamba).